The following is a 220-amino-acid chain: MKTGALATFLALCLPVTVFATTLRLSNEVDLLVLDGKKVSSSLLRGAESIELENGPHQLVFRVEKTIRLPGNEERLYISPPLVISFDTQLISQVNFQLPRLENEREASHFNAAPRLALLDGDAMPIPVKLDILAITSTAKVVDYEIETERYNKSAKRASLPQFATMMADDSTLLSDVSELDTVPPQSQTLTEQRLKYCFRLADPQTRHHFLQWAEKQPPS.

Residues 1–20 (MKTGALATFLALCLPVTVFA) form the signal peptide.

This sequence belongs to the UPF0319 family.

This is UPF0319 protein YccT from Salmonella paratyphi A (strain ATCC 9150 / SARB42).